A 216-amino-acid chain; its full sequence is MRDQFICLALLLCALHSACGLYFHISETERKCFIEEVPDETTVIVNYKVELYDPRSNGFMPSSPGIGMHVEVRDSDDKIILSRVYSSQGRISFTSHTPGEHVICMYSNSTAWFSGAQLRVHLDIQVGEHAIDYANVAQKEKLTELQLRIRQLLDQVEQITKEQNYQRYREERFRHTSESTNSRVLWWSLAQTLVLVCMGFWQMRHLKSFFEAKKLV.

The N-terminal stretch at 1–20 is a signal peptide; that stretch reads MRDQFICLALLLCALHSACG. Residues 21-182 are Lumenal-facing; the sequence is LYFHISETER…FRHTSESTNS (162 aa). The 97-residue stretch at 30-126 folds into the GOLD domain; that stretch reads RKCFIEEVPD…QLRVHLDIQV (97 aa). A coiled-coil region spans residues 134–164; sequence ANVAQKEKLTELQLRIRQLLDQVEQITKEQN. Residues 183–203 traverse the membrane as a helical segment; sequence RVLWWSLAQTLVLVCMGFWQM. Residues 204–216 lie on the Cytoplasmic side of the membrane; the sequence is RHLKSFFEAKKLV. The Prevents secretion from ER signature appears at 213-216; the sequence is KKLV.

This sequence belongs to the EMP24/GP25L family.

The protein resides in the endoplasmic reticulum membrane. In terms of biological role, eca and bai are essential, though not redundant, for dorsoventral patterning of the embryo. Specifically required during early embryogenesis for the activity of maternal tkv, while the zygotic tkv is not affected. Involved in Golgi organization. This Drosophila pseudoobscura pseudoobscura (Fruit fly) protein is Transmembrane emp24 domain-containing protein eca.